A 179-amino-acid polypeptide reads, in one-letter code: uncharacterized protein (179 aa).

The protein localises to the plastid. It localises to the cyanelle. This is an uncharacterized protein from Cyanophora paradoxa.